The following is a 391-amino-acid chain: Cdc42 effector protein 1 (391 aa).

Phosphoserine is present on residues Ser-19 and Ser-27. Residue Thr-34 is modified to Phosphothreonine. Residues 38-52 form the CRIB domain; sequence ISHPLGDFRHTMHVG. The residue at position 39 (Ser-39) is a Phosphoserine. An Omega-N-methylarginine modification is found at Arg-53. Residues Ser-65, Ser-73, Ser-77, Ser-101, Ser-113, Ser-121, and Ser-139 each carry the phosphoserine modification. The interval 163-189 is disordered; sequence ISRLPRSEKPHDRDRDGSFPSEPGLRR. Residues 167 to 179 are compositionally biased toward basic and acidic residues; the sequence is PRSEKPHDRDRDG. Phosphoserine is present on residues Ser-180, Ser-190, Ser-192, and Ser-195. 8 consecutive repeat copies span residues 220 to 226, 227 to 233, 234 to 240, 241 to 247, 248 to 254, 255 to 261, 262 to 268, and 269 to 275. Positions 220–275 are 8 X 7 AA tandem repeats of [PT]-[AT]-A-[ENT]-[PT]-[PTS]-[AG]; sequence PAAETPAPAANPPAPTANPTGPAANPPATTANPPAPAANPSAPAATPTGPAANPPA. Residues 221 to 338 are disordered; that stretch reads AAETPAPAAN…HHYPEMDARQ (118 aa). Positions 236-270 are enriched in low complexity; it reads ANPTGPAANPPATTANPPAPAANPSAPAATPTGPA. Ser-303 is modified (phosphoserine). Residues 327-338 are compositionally biased toward basic and acidic residues; the sequence is GGHHYPEMDARQ. Residues Ser-350 and Ser-353 each carry the phosphoserine modification. The disordered stretch occupies residues 354 to 391; that stretch reads LDEEWRAPQAGSRTPVPSTVQANTFEFADAEEDDEVKV. The span at 364-377 shows a compositional bias: polar residues; it reads GSRTPVPSTVQANT. The segment covering 381–391 has biased composition (acidic residues); that stretch reads ADAEEDDEVKV.

Belongs to the BORG/CEP family. As to quaternary structure, interacts with RHOQ and CDC42, in a GTP-dependent manner. In terms of tissue distribution, endothelial and bone marrow stromal cells.

The protein resides in the endomembrane system. It is found in the cytoplasm. It localises to the cytoskeleton. Functionally, probably involved in the organization of the actin cytoskeleton. Induced membrane extensions in fibroblasts. The sequence is that of Cdc42 effector protein 1 (CDC42EP1) from Homo sapiens (Human).